A 1205-amino-acid chain; its full sequence is Nitric oxide synthase 3 (1205 aa).

Disordered stretches follow at residues 1–20 and 26–73; these read MGNLKSVGQEPGPPCGLGLG and CGKQ…FPRV. Residues 33 to 47 are compositionally biased toward pro residues; the sequence is SPAPEPSWAPAPATP. Cys-96 and Cys-101 together coordinate Zn(2+). Residues 100–489 form an interaction with NOSIP region; the sequence is RCLGSLVLPR…PDPWKGSAAK (390 aa). Position 104 (Ser-104) interacts with (6R)-L-erythro-5,6,7,8-tetrahydrobiopterin. Ser-116 is subject to Phosphoserine. Residue Cys-186 participates in heme b binding. L-arginine contacts are provided by Gln-250, Trp-359, Tyr-360, and Glu-364. Arg-368 lines the (6R)-L-erythro-5,6,7,8-tetrahydrobiopterin pocket. Asn-369 contacts L-arginine. Residues Ala-449, Trp-450, and Phe-463 each coordinate (6R)-L-erythro-5,6,7,8-tetrahydrobiopterin. Tyr-478 is a binding site for heme b. At Thr-498 the chain carries Phosphothreonine. FMN-binding residues include Ser-529, Glu-530, Thr-531, Arg-533, Ser-575, and Thr-576. A phosphoserine mark is found at Ser-618, Ser-636, and Ser-641. 4 residues coordinate FMN: Ser-657, Cys-664, Glu-690, and Gln-694. NADP(+) is bound at residue Arg-781. Residues 796-850 are disordered; it reads LQYQPGDHISPHPPPRSSHRPGQGGPRVAPFSERPLMPRTPPPGGPPPSWVRDPR. Residue His-803 coordinates FAD. A compositionally biased stretch (pro residues) spans 833 to 844; the sequence is PRTPPPGGPPPS. FAD-binding residues include Arg-939, Tyr-941, Ser-942, Thr-957, and Ala-959. 7 residues coordinate NADP(+): Thr-1018, Arg-1051, Ser-1080, Arg-1081, Lys-1087, Tyr-1089, and Gln-1091. Thr-1177 is modified (phosphothreonine). A phosphoserine mark is found at Ser-1179 and Ser-1181.

The protein belongs to the NOS family. Homodimer. Interacts with NOSIP and NOSTRIN. Interacts with HSP90AB1. Forms a complex with ASL, ASS1 and SLC7A1; the complex regulates cell-autonomous L-arginine synthesis and citrulline recycling while channeling extracellular L-arginine to nitric oxide synthesis pathway. It depends on heme b as a cofactor. The cofactor is FAD. FMN is required as a cofactor. Requires (6R)-L-erythro-5,6,7,8-tetrahydrobiopterin as cofactor.

The protein localises to the membrane. The protein resides in the caveola. Its subcellular location is the cytoplasm. It is found in the cytoskeleton. It localises to the golgi apparatus. The protein localises to the cell membrane. The enzyme catalyses 2 L-arginine + 3 NADPH + 4 O2 + H(+) = 2 L-citrulline + 2 nitric oxide + 3 NADP(+) + 4 H2O. With respect to regulation, stimulated by calcium/calmodulin. Inhibited by NOSIP and NOSTRIN. Its function is as follows. Produces nitric oxide (NO) which is implicated in vascular smooth muscle relaxation through a cGMP-mediated signal transduction pathway. NO mediates vascular endothelial growth factor (VEGF)-induced angiogenesis in coronary vessels and promotes blood clotting through the activation of platelets. This chain is Nitric oxide synthase 3 (NOS3), found in Ovis aries (Sheep).